The chain runs to 328 residues: DNA-directed RNA polymerase subunit alpha (328 aa).

The interval 1–230 (MIQITGRKFK…IILDHFMFIE (230 aa)) is alpha N-terminal domain (alpha-NTD). The segment at 257-328 (PEDVMSKKVE…FGLSLRKGDK (72 aa)) is alpha C-terminal domain (alpha-CTD).

This sequence belongs to the RNA polymerase alpha chain family. Homodimer. The RNAP catalytic core consists of 2 alpha, 1 beta, 1 beta' and 1 omega subunit. When a sigma factor is associated with the core the holoenzyme is formed, which can initiate transcription.

It carries out the reaction RNA(n) + a ribonucleoside 5'-triphosphate = RNA(n+1) + diphosphate. Its function is as follows. DNA-dependent RNA polymerase catalyzes the transcription of DNA into RNA using the four ribonucleoside triphosphates as substrates. This is DNA-directed RNA polymerase subunit alpha from Fervidobacterium nodosum (strain ATCC 35602 / DSM 5306 / Rt17-B1).